We begin with the raw amino-acid sequence, 184 residues long: Large ribosomal subunit protein bL9 (184 aa).

The interval 160 to 184 is disordered; it reads LQNQKSEQQEAEQDANKEAADGDDS. Positions 173-184 are enriched in basic and acidic residues; it reads DANKEAADGDDS.

This sequence belongs to the bacterial ribosomal protein bL9 family.

In terms of biological role, binds to the 23S rRNA. The chain is Large ribosomal subunit protein bL9 from Wolbachia sp. subsp. Drosophila simulans (strain wRi).